We begin with the raw amino-acid sequence, 590 residues long: Keratin, type II cytoskeletal 5 (590 aa).

The span at 1–18 shows a compositional bias: low complexity; sequence MSRQSSVSFRSGGSRSFS. Positions 1–20 are disordered; sequence MSRQSSVSFRSGGSRSFSTA. The tract at residues 1 to 167 is head; that stretch reads MSRQSSVSFR…DPSIQRVRTE (167 aa). Phosphoserine is present on residues serine 5, serine 8, serine 16, and serine 21. Residue threonine 24 is modified to Phosphothreonine; by CDK1. Serine 26, serine 36, serine 50, serine 64, serine 71, serine 75, and serine 82 each carry phosphoserine. Threonine 151 is subject to Phosphothreonine; by CDK1. Positions 168–203 are coil 1A; the sequence is EREQIKTLNNKFASFIDKVRFLEQQNKVLDTKWTLL. Residues 168–481 form the IF rod domain; sequence EREQIKTLNN…KLLEGEECRL (314 aa). Residues 204–222 are linker 1; it reads QEQGTKTVRQNLEPLFEQY. The coil 1B stretch occupies residues 223–315; that stretch reads INNLRRQLDS…FFDAELSQMQ (93 aa). The linker 12 stretch occupies residues 316 to 338; that stretch reads THVSDTSVVLSMDNNRNLDLDSI. The tract at residues 339–477 is coil 2; the sequence is IAEVKAQYEE…ATYRKLLEGE (139 aa). The interval 478–590 is tail; the sequence is ECRLSGEGVG…TSSSRKSFKS (113 aa). The segment at 566-590 is disordered; that stretch reads GSGGGSSSSVKFVSTTSSSRKSFKS. Positions 572–590 are enriched in low complexity; the sequence is SSSVKFVSTTSSSRKSFKS.

It belongs to the intermediate filament family. Heterodimer of a type I and a type II keratin. Heterodimer with type I keratin KRT25 leading to the formation of keratin intermediate filament (KIF) network. Forms a heterodimer (via 2B domains) with KRT14 (via 2B domains). Interacts with PLEC isoform 1C, when in a heterodimer with KRT14. Interacts with TCHP. Interacts with EPPK1. Interacts with AMELX. Interacts with PKP1 (via N-terminus) and PKP2. Post-translationally, phosphorylated by CDK1, AURKB and Rho-kinase, phosphorylation is regulated by the cell cycle. Thr-24 phosphorylation, mediated by CDK1, peaks during prometaphase or metaphase cells with phosphorylated filamentous structures evident throughout the cytoplasm during early mitosis. CDK1 phosphorylates Thr-24 in mitotic cells at the site of injury. O-glycosylated. As to expression, expressed in corneal epithelium (at protein level). Expressed in keratinocytes (at protein level).

It localises to the cytoplasm. Its function is as follows. Required for the formation of keratin intermediate filaments in the basal epidermis and maintenance of the skin barrier in response to mechanical stress. Regulates the recruitment of Langerhans cells to the epidermis, potentially by modulation of the abundance of macrophage chemotactic cytokines, macrophage inflammatory cytokines and CTNND1 localization in keratinocytes. The sequence is that of Keratin, type II cytoskeletal 5 (KRT5) from Homo sapiens (Human).